Here is a 100-residue protein sequence, read N- to C-terminus: Small ribosomal subunit protein uS14c (100 aa).

Positions 1-22 (MARKGLIQRENKRQKLEQKYHS) are disordered. Positions 7-20 (IQRENKRQKLEQKY) are enriched in basic and acidic residues.

The protein belongs to the universal ribosomal protein uS14 family. Part of the 30S ribosomal subunit.

The protein resides in the plastid. It localises to the chloroplast. In terms of biological role, binds 16S rRNA, required for the assembly of 30S particles. This Daucus carota (Wild carrot) protein is Small ribosomal subunit protein uS14c.